The sequence spans 520 residues: Ribonuclease Y (520 aa).

A helical membrane pass occupies residues 1-21 (MDIITIIIAVIAGIGGGFGIS). Residues 210-276 (CVSVFNIESD…RLALHKLVTD (67 aa)) enclose the KH domain. Positions 336-429 (LLQHSREVSK…VQVCDAISGA (94 aa)) constitute an HD domain.

The protein belongs to the RNase Y family.

The protein resides in the cell membrane. Its function is as follows. Endoribonuclease that initiates mRNA decay. In Flavobacterium psychrophilum (strain ATCC 49511 / DSM 21280 / CIP 103535 / JIP02/86), this protein is Ribonuclease Y.